The primary structure comprises 270 residues: Pyrroline-5-carboxylate reductase (270 aa).

The protein belongs to the pyrroline-5-carboxylate reductase family.

The protein localises to the cytoplasm. The enzyme catalyses L-proline + NADP(+) = (S)-1-pyrroline-5-carboxylate + NADPH + 2 H(+). It catalyses the reaction L-proline + NAD(+) = (S)-1-pyrroline-5-carboxylate + NADH + 2 H(+). Its pathway is amino-acid biosynthesis; L-proline biosynthesis; L-proline from L-glutamate 5-semialdehyde: step 1/1. Functionally, catalyzes the reduction of 1-pyrroline-5-carboxylate (PCA) to L-proline. This is Pyrroline-5-carboxylate reductase from Corynebacterium melassecola.